We begin with the raw amino-acid sequence, 127 residues long: Large ribosomal subunit protein uL18 (127 aa).

Residues 1-26 (MASTLTVRKSLSDRAKARARRQARGR) are disordered. Over residues 17–26 (ARARRQARGR) the composition is skewed to basic residues.

Belongs to the universal ribosomal protein uL18 family. As to quaternary structure, part of the 50S ribosomal subunit; part of the 5S rRNA/L5/L18/L25 subcomplex. Contacts the 5S and 23S rRNAs.

In terms of biological role, this is one of the proteins that bind and probably mediate the attachment of the 5S RNA into the large ribosomal subunit, where it forms part of the central protuberance. This Cutibacterium acnes (strain DSM 16379 / KPA171202) (Propionibacterium acnes) protein is Large ribosomal subunit protein uL18.